A 539-amino-acid polypeptide reads, in one-letter code: MGKGQPKEPKIEQSVVDLCKRTVAMNLLQCYPTTTVDEMNCEEWGNGTESTQSVAACQGCIELRKEVTDLRQAVNLILPMLPLYPTIGNGFNATGLAAQPTLQHVIQQSLLRKRPVAQTPTVPQPECPGQIRPVLSSPAAALQNVIMLNPWIMGSSLKPASPTLPNGQIPTTIGETSLQGTDDQTVKWIGPSSVDSNGQKTDSSAASAGDNQNIDVIGDGSESPTSSNHSAQEIALMTSQQTFLNALKDSSFLFTNPVPTVETAPPLRVAPPINGTTNGTAKAGGPERKPRKPVNDDIVKIVRNQDLSEENISMFEIPVPKAIASDPTFRPVSEQQIIQQIIQGKKYEEMEVGECMIQLCKKLAEKRVFGPRLMSQTTVAGLNHSNYANLPIKGICYIQHVCRKVLYDKFENEEDFWDKFREAMRKLAARCRRVRHAKKTKHNREEAQAEMLSKRYGEDMPFNLNGAGLIRPKVETVSPEANILNSDQIKSQLESLFAHIPKTESETPLIEIIQQNISLFTHLIRTKVESQSPPLQGPQ.

Disordered regions lie at residues P162–S230 and E262–P293. Polar residues-rich tracts occupy residues T163–D183 and S193–I214. The segment covering N274–G284 has biased composition (low complexity). Residues D296–T440 form an involved in sequence-specific DNA-binding region.

In terms of processing, cleaved by caspase ced-3 in vitro. In terms of tissue distribution, high levels in hypodermal, intestinal, body wall muscle, nerve ring, and ventral nerve cord cells of embryos and L1 animals.

Its subcellular location is the nucleus. Its function is as follows. Heterochronic protein which controls the choice of stage specific cell fates. Involved in the temporal progression of vulval fate patterning, possibly by inhibiting lin-12. Acts as a transcription factor involved in the stage-specific repression of various genes, including insulin/insulin-like growth factor gene ins-33 and neuropeptide-encoding gene nlp-45. Binds to the consensus sequence 5'-[CT]GGA[AG]-3' in the regulatory elements of target genes. Plays a role in governing the developmental timing of male tail tip morphogenesis. Plays a role in controlling the timing of seam cell development during the larval stages. Plays a role in promoting survival at high temperatures in larvae. Involved in maintenance of the architecture of the ventral nerve cord, perhaps acting via modulating expression of the immunoglobulin domain gene zig-4. In terms of biological role, may specify L2 and later cell fates, creating a temporal switch. Functionally, may be involved in specifying L1 cell fates. The polypeptide is Protein lin-14 (Caenorhabditis elegans).